The following is a 148-amino-acid chain: MELDALDRKILEILLKDSRTSYREIAKDLNVAVGTIYNRIKKLEDSGVIQAFTVKLNYESIGYDLTAIIGIKAQGKKIREIERIIAKDKRVTCVYDVTGEYDIIVIAKFRNREDMNRFVKGVLSIDGVEKTNTHVVLEIVKEDFRLEP.

Positions 3-64 (LDALDRKILE…KLNYESIGYD (62 aa)) constitute an HTH asnC-type domain. A DNA-binding region (H-T-H motif) is located at residues 22 to 41 (YREIAKDLNVAVGTIYNRIK).

This is an uncharacterized protein from Pyrococcus horikoshii (strain ATCC 700860 / DSM 12428 / JCM 9974 / NBRC 100139 / OT-3).